The following is an 819-amino-acid chain: MGSGARFPSGTLRVRWLLLLGLVGPVLGAARPGFQQTSHLSSYEIITPWRLTRERREAPRPYSKQVSYVIQAEGKEHIIHLERNKDLLPEDFVVYTYNKEGTLITDHPNIQNHCHYRGYVEGVHNSSIALSDCFGLRGLLHLENASYGIEPLQNSSHFEHIIYRMDDVYKEPLKCGVSNKDIEKETAKDEEEEPPSMTQLLRRRRAVLPQTRYVELFIVVDKERYDMMGRNQTAVREEMILLANYLDSMYIMLNIRIVLVGLEIWTNGNLINIVGGAGDVLGNFVQWREKFLITRRRHDSAQLVLKKGFGGTAGMAFVGTVCSRSHAGGINVFGQITVETFASIVAHELGHNLGMNHDDGRDCSCGAKSCIMNSGASGSRNFSSCSAEDFEKLTLNKGGNCLLNIPKPDEAYSAPSCGNKLVDAGEECDCGTPKECELDPCCEGSTCKLKSFAECAYGDCCKDCRFLPGGTLCRGKTSECDVPEYCNGSSQFCQPDVFIQNGYPCQNNKAYCYNGMCQYYDAQCQVIFGSKAKAAPKDCFIEVNSKGDRFGNCGFSGNEYKKCATGNALCGKLQCENVQEIPVFGIVPAIIQTPSRGTKCWGVDFQLGSDVPDPGMVNEGTKCGAGKICRNFQCVDASVLNYDCDVQKKCHGHGVCNSNKNCHCENGWAPPNCETKGYGGSVDSGPTYNEMNTALRDGLLVFFFLIVPLIVCAIFIFIKRDQLWRSYFRKKRSQTYESDGKNQANPSRQPGSVPRHVSPVTPPREVPIYANRFAVPTYAAKQPQQFPSRPPPPQPKVSSQGNLIPARPAPAPPLYSSLT.

An N-terminal signal peptide occupies residues 1–28; it reads MGSGARFPSGTLRVRWLLLLGLVGPVLG. Over 29–697 the chain is Extracellular; sequence AARPGFQQTS…YNEMNTALRD (669 aa). N125, N144, N154, and N231 each carry an N-linked (GlcNAc...) asparagine glycan. Positions 212-406 constitute a Peptidase M12B domain; sequence RYVELFIVVD…KGGNCLLNIP (195 aa). 7 disulfide bridges follow: C322-C401, C363-C385, C365-C370, C473-C493, C644-C656, C650-C662, and C664-C673. A Zn(2+)-binding site is contributed by H347. E348 is an active-site residue. H351 and H357 together coordinate Zn(2+). 2 N-linked (GlcNAc...) asparagine glycosylation sites follow: N381 and N487. Residues 414–501 enclose the Disintegrin domain; the sequence is APSCGNKLVD…FCQPDVFIQN (88 aa). One can recognise an EGF-like domain in the interval 644–698; sequence CDVQKKCHGHGVCNSNKNCHCENGWAPPNCETKGYGGSVDSGPTYNEMNTALRDG. Residues 698–718 form a helical membrane-spanning segment; it reads GLLVFFFLIVPLIVCAIFIFI. At 719-819 the chain is on the cytoplasmic side; sequence KRDQLWRSYF…PAPPLYSSLT (101 aa). 2 disordered regions span residues 734 to 763 and 780 to 819; these read QTYE…VTPP and AKQP…SSLT. The span at 735-750 shows a compositional bias: polar residues; it reads TYESDGKNQANPSRQP. S758 carries the post-translational modification Phosphoserine. T761 is subject to Phosphothreonine.

Interacts with SH3GL2 and SNX9 through its cytoplasmic tail. Interacts with ITGA6. Zn(2+) serves as cofactor. Proteolytically cleaved in the trans-Golgi network before it reaches the plasma membrane to generate a mature protein. The removal of the pro-domain occurs via cleavage at two different sites. Processed most likely by a pro-protein convertase such as furin, at the boundary between the pro-domain and the catalytic domain. An additional upstream cleavage pro-protein convertase site (Arg-56/Glu-57) has an important role in the activation of ADAM9. Post-translationally, phosphorylation is induced in vitro by phorbol-12-myristate-13-acetate (PMA). Widely expressed. Expressed in chondrocytes. Isoform 2 is highly expressed in liver and heart.

The protein resides in the cell membrane. The protein localises to the secreted. Its activity is regulated as follows. Synthesized as an inactive form which is proteolytically cleaved to generate an active enzyme. Processing at the upstream site is particularly important for activation of the proenzyme, whereas processing at the boundary between the pro-domain and the catalytic domain does not appear to be essential. Inhibited by hydroxamic acid-based inhibitors. Functionally, metalloprotease that cleaves and releases a number of molecules with important roles in tumorigenesis and angiogenesis, such as TEK, KDR, EPHB4, CD40, VCAM1 and CDH5. May mediate cell-cell, cell-matrix interactions and regulate the motility of cells via interactions with integrins. Its function is as follows. May act as alpha-secretase for amyloid precursor protein (APP). This chain is Disintegrin and metalloproteinase domain-containing protein 9 (ADAM9), found in Homo sapiens (Human).